The sequence spans 166 residues: Putative transcriptional regulatory protein for hcr operon (166 aa).

The 155-residue stretch at 1 to 155 folds into the HTH marR-type domain; sequence MRKHRGKPAN…LIGLLKRLYR (155 aa).

Functionally, may be involved in the regulation of genes for 4-hydroxybenzoyl-CoA reductase. The polypeptide is Putative transcriptional regulatory protein for hcr operon (Thauera aromatica).